A 468-amino-acid polypeptide reads, in one-letter code: MKPTLVLVGRPNVGKSTLFNRLTRSRDAIVADIPGLTRDRHYGHGRLGLKPYLVVDTGGFEPVVKSGILHAMARQTLQAVDEADVVLFIVDGRQGLASQDKIIADQLRKTGRKIILVVNKAEGMPYSTAAVEFHELGLGTPCVVSALHGEHLGELIDFALEDYPYAEDIEAEPGQEKHPVIAIAGRPNVGKSTLINTLLGEERMIAFDQPGTTRDSIYIDFEYGQRRYTLIDTAGLRRSGKVWETVEKFSVVKTLQSIEAANVVVLVLDAQSGISEQDAHIAGFILETGRALVIAINKWDGMDDYQRDTTKREFERKLAFLNFANLHYISALYGNGVKALMPSVDAAYTAAMAHIPTPKLTRVMLAAVAKQQPPRGGVSRPKLRYAHQGGENPPLIIVHGSMLDHVPQTYRRYLENTFRDVFELKGTPLRVEFRTGHNPYAGKKAPPLTEEEARRAHSRRRRNRKKYG.

EngA-type G domains lie at 3–167 (PTLV…PYAE) and 179–352 (PVIA…TAAM). GTP contacts are provided by residues 9 to 16 (GRPNVGKS), 56 to 60 (DTGGF), 119 to 122 (NKAE), 185 to 192 (GRPNVGKS), 232 to 236 (DTAGL), and 297 to 300 (NKWD). The KH-like domain occupies 353 to 437 (AHIPTPKLTR…PLRVEFRTGH (85 aa)). A disordered region spans residues 434-468 (RTGHNPYAGKKAPPLTEEEARRAHSRRRRNRKKYG). Residues 456–468 (AHSRRRRNRKKYG) are compositionally biased toward basic residues.

It belongs to the TRAFAC class TrmE-Era-EngA-EngB-Septin-like GTPase superfamily. EngA (Der) GTPase family. In terms of assembly, associates with the 50S ribosomal subunit.

GTPase that plays an essential role in the late steps of ribosome biogenesis. This chain is GTPase Der, found in Nitrosomonas eutropha (strain DSM 101675 / C91 / Nm57).